The chain runs to 194 residues: Homing endonuclease I-DmoI (194 aa).

One can recognise a DOD-type homing endonuclease domain in the interval 14 to 147 (LLGLIIGDGG…VSRWLNNLGV (134 aa)). Residues D21 and E117 contribute to the active site.

Requires a divalent metal cation as cofactor.

Functionally, endonuclease involved in intron homing. Recognizes DNA in the 23S rRNA gene intron (minimally 5'-CCGGGTAAGTTCCGG-3'), cutting after A-8 on the top and C-11 on the bottom strand. Has a slow turnover rate, cuts the coding strand with a slight preference over the non-coding strand. This chain is Homing endonuclease I-DmoI, found in Desulfurococcus mucosus (Desulfurococcus mobilis).